We begin with the raw amino-acid sequence, 251 residues long: Gamma-interferon-inducible lysosomal thiol reductase (251 aa).

Positions 1–21 (MFGFRLSVLLFAVCSLSACSC) are cleaved as a signal peptide. In terms of domain architecture, Saposin A-type spans 22-60 (MFVNSCKYPPSQWCDSRDIAAQCGVLEQCMKFNASPVTV). C68 and C71 are oxidised to a cystine. N108 carries an N-linked (GlcNAc...) asparagine glycan.

This sequence belongs to the GILT family. As to quaternary structure, dimer; disulfide-linked. Highly expressed in spleen and kidney. Also detected at lower levels in liver, heart, brain, intestine and gill.

The protein resides in the secreted. The protein localises to the lysosome. Lysosomal thiol reductase that can reduce protein disulfide bonds. May facilitate the complete unfolding of proteins destined for lysosomal degradation. Plays an important role in antigen processing. The chain is Gamma-interferon-inducible lysosomal thiol reductase from Carassius auratus (Goldfish).